Here is a 338-residue protein sequence, read N- to C-terminus: RAB6-interacting golgin (338 aa).

2 stretches are compositionally biased toward basic and acidic residues: residues M1–L14 and R46–R59. 2 disordered regions span residues M1–D109 and A127–K188. Low complexity-rich tracts occupy residues K60–P73 and S153–S167. A coiled-coil region spans residues L192 to D244. Residues D244–C260 form an essential for Sas-6 binding region. The tract at residues A246–N286 is necessary for localization to the centrosome. A necessary for localization to the Golgi region spans residues A246–S323. The tract at residues C260–N286 is necessary for interaction with Sas-6 and essential for homodimerization.

Belongs to the GORAB family. Homodimer (via C-terminus); dimerization appears to be required for its trans-Golgi localization but not for its function and centriolar localization. Interacts (via C-terminus) with Rab6; binds Rab6 as a homodimer, this interaction seems to be required for trans-Golgi localization. Interacts (via C-terminus) with Sas-6; binds as a monomer to a Sas-6 homodimer.

It is found in the cytoplasm. Its subcellular location is the cytoskeleton. The protein resides in the microtubule organizing center. It localises to the centrosome. The protein localises to the centriole. It is found in the golgi apparatus. Its subcellular location is the trans-Golgi network. Its function is as follows. Required for centriole duplication likely through its interaction with Sas-6. During embryogenesis, maternally provided protein is required for centrosome duplication and nuclear division cycles of the syncytial embryos. In femoral chordotonal organs, required for sensory cilia structural integrity and functionality necessary for motor coordination. In male germline, has a role in cytokinesis which seems dependent on its localization to the Golgi. The protein is RAB6-interacting golgin of Drosophila melanogaster (Fruit fly).